Consider the following 133-residue polypeptide: Small ribosomal subunit protein bS6 (133 aa).

It belongs to the bacterial ribosomal protein bS6 family.

In terms of biological role, binds together with bS18 to 16S ribosomal RNA. The protein is Small ribosomal subunit protein bS6 of Borrelia turicatae (strain 91E135).